A 580-amino-acid polypeptide reads, in one-letter code: V-type proton ATPase catalytic subunit A (580 aa).

209–216 (GAFGCGKT) serves as a coordination point for ATP.

This sequence belongs to the ATPase alpha/beta chains family. In terms of assembly, V-ATPase is a heteromultimeric enzyme composed of a peripheral catalytic V1 complex (main components: subunits A, B, C, D, E, and F) attached to an integral membrane V0 proton pore complex (main component: the proteolipid protein).

The enzyme catalyses ATP + H2O + 4 H(+)(in) = ADP + phosphate + 5 H(+)(out). Functionally, catalytic subunit of the peripheral V1 complex of vacuolar ATPase. V-ATPase vacuolar ATPase is responsible for acidifying a variety of intracellular compartments in eukaryotic cells. The polypeptide is V-type proton ATPase catalytic subunit A (Hordeum vulgare (Barley)).